Reading from the N-terminus, the 224-residue chain is Transmembrane protein C16orf54 (224 aa).

Thr-4 carries O-linked (GalNAc...) threonine glycosylation. Residues 32 to 52 traverse the membrane as a helical segment; sequence IPIMLVLATLAALFILTTAVL. Disordered regions lie at residues 104–138 and 152–203; these read TDRA…SNLG and WGPQ…GLQP. A phosphothreonine mark is found at Thr-112 and Thr-116. The residue at position 194 (Ser-194) is a Phosphoserine.

In terms of processing, O-glycosylated with core 1 or possibly core 8 glycans.

The protein localises to the membrane. This chain is Transmembrane protein C16orf54 (C16orf54), found in Homo sapiens (Human).